A 389-amino-acid polypeptide reads, in one-letter code: Transcription factor TGAL10 (389 aa).

The tract at residues 80–110 is disordered; the sequence is DDQDNAAALQESPRHASDSFEQEASKPRDKI. The span at 91-110 shows a compositional bias: basic and acidic residues; that stretch reads SPRHASDSFEQEASKPRDKI. One can recognise a bZIP domain in the interval 107-151; sequence RDKIQRRLAQNREAARKSRLRKKAYIQNLETSRMKLAHLEQEITR. A basic motif region spans residues 109–129; that stretch reads KIQRRLAQNREAARKSRLRKK. Residues 135–149 are leucine-zipper; that stretch reads LETSRMKLAHLEQEI. Positions 176–389 constitute a DOG1 domain; the sequence is VVTFEVEYAQ…LHVRRRAELG (214 aa). 2 disordered regions span residues 320–345 and 370–389; these read TSCD…GDGG and HRRS…AELG. Over residues 380–389 the composition is skewed to basic residues; it reads LHVRRRAELG.

Belongs to the bZIP family.

It localises to the nucleus. In terms of biological role, transcriptional regulator involved in defense response. The protein is Transcription factor TGAL10 of Oryza sativa subsp. japonica (Rice).